Reading from the N-terminus, the 160-residue chain is Phosphopantetheine adenylyltransferase (160 aa).

Residue Thr-11 participates in substrate binding. ATP is bound by residues 11–12 and His-19; that span reads TF. Substrate-binding residues include Lys-43, Thr-75, and Arg-89. ATP is bound by residues 90-92, Glu-100, and 125-131; these read GLR and YSFLSSS.

It belongs to the bacterial CoaD family. Homohexamer. The cofactor is Mg(2+).

It is found in the cytoplasm. It carries out the reaction (R)-4'-phosphopantetheine + ATP + H(+) = 3'-dephospho-CoA + diphosphate. The protein operates within cofactor biosynthesis; coenzyme A biosynthesis; CoA from (R)-pantothenate: step 4/5. Reversibly transfers an adenylyl group from ATP to 4'-phosphopantetheine, yielding dephospho-CoA (dPCoA) and pyrophosphate. In Listeria monocytogenes serovar 1/2a (strain ATCC BAA-679 / EGD-e), this protein is Phosphopantetheine adenylyltransferase.